The primary structure comprises 325 residues: Thiamine-monophosphate kinase (325 aa).

Mg(2+) contacts are provided by Asp30, Ser45, Thr46, and Asp47. His54 provides a ligand contact to substrate. Positions 75 and 122 each coordinate Mg(2+). Residues 121–122 and Arg146 contribute to the ATP site; that span reads GD. Asp212 is a binding site for Mg(2+). Ser214 provides a ligand contact to ATP. Asp215 is a binding site for Mg(2+). Positions 263 and 319 each coordinate substrate.

This sequence belongs to the thiamine-monophosphate kinase family.

It carries out the reaction thiamine phosphate + ATP = thiamine diphosphate + ADP. Its pathway is cofactor biosynthesis; thiamine diphosphate biosynthesis; thiamine diphosphate from thiamine phosphate: step 1/1. Functionally, catalyzes the ATP-dependent phosphorylation of thiamine-monophosphate (TMP) to form thiamine-pyrophosphate (TPP), the active form of vitamin B1. The sequence is that of Thiamine-monophosphate kinase from Escherichia coli O157:H7.